We begin with the raw amino-acid sequence, 215 residues long: Glutathione S-transferase D6 (215 aa).

Residues 1–80 (MDLYNMSGSP…YLVEQYGKDD (80 aa)) enclose the GST N-terminal domain. Residues S9, 50–52 (HTI), and 64–66 (ETR) each bind glutathione. Residues 86-206 (DPQKQALINQ…LARIQSAKKF (121 aa)) enclose the GST C-terminal domain.

The protein belongs to the GST superfamily. Delta family. Homodimer.

It carries out the reaction RX + glutathione = an S-substituted glutathione + a halide anion + H(+). Conjugation of reduced glutathione to a wide number of exogenous and endogenous hydrophobic electrophiles. May be involved in detoxification. This chain is Glutathione S-transferase D6, found in Drosophila melanogaster (Fruit fly).